Consider the following 597-residue polypeptide: Phosphoinositide phosphatase SAC7 (597 aa).

In terms of domain architecture, SAC spans 130–458 (LSVAEKTTGL…GDEISIQYSG (329 aa)). Positions 393-404 (RSNCIDCLDRTN) match the Phosphatase catalytic core motif. Transmembrane regions (helical) follow at residues 528 to 548 (AVANFPVALFVVLMSFWFATM) and 559 to 579 (HKHLFFSLLWTGICVGMAALV).

Ubiquitous.

It localises to the endoplasmic reticulum membrane. It is found in the cytoplasmic vesicle membrane. In terms of biological role, phosphoinositide phosphatase that preferentially hydrolyzes PtdIns(4)P. Regulates the accumulation of PtdIns(4)P on membrane compartments at the tips of growing root hairs leading to proper root hair development. The sequence is that of Phosphoinositide phosphatase SAC7 (SAC7) from Arabidopsis thaliana (Mouse-ear cress).